The chain runs to 55 residues: ATP synthase protein 8 (55 aa).

Residues 8 to 28 (WWIVNFSLIWASVLIVISLLL) traverse the membrane as a helical segment. Residues 34–55 (NSAGQSSSSLTLNKTTTNWQWL) form a disordered region. The span at 39–55 (SSSSLTLNKTTTNWQWL) shows a compositional bias: low complexity.

This sequence belongs to the ATPase protein 8 family. In terms of assembly, F-type ATPases have 2 components, CF(1) - the catalytic core - and CF(0) - the membrane proton channel.

It localises to the mitochondrion membrane. Its function is as follows. Mitochondrial membrane ATP synthase (F(1)F(0) ATP synthase or Complex V) produces ATP from ADP in the presence of a proton gradient across the membrane which is generated by electron transport complexes of the respiratory chain. F-type ATPases consist of two structural domains, F(1) - containing the extramembraneous catalytic core and F(0) - containing the membrane proton channel, linked together by a central stalk and a peripheral stalk. During catalysis, ATP synthesis in the catalytic domain of F(1) is coupled via a rotary mechanism of the central stalk subunits to proton translocation. Part of the complex F(0) domain. Minor subunit located with subunit a in the membrane. The sequence is that of ATP synthase protein 8 (MT-ATP8) from Strongylocentrotus purpuratus (Purple sea urchin).